The following is a 75-amino-acid chain: RNA-binding protein KhpA (75 aa).

In terms of domain architecture, KH spans 29–75 (KKVYEIVVNEEDVGQVIGKDGRTIKSLKILLSALMGDSKEITIKVVR).

The protein belongs to the KhpA RNA-binding protein family. Forms a complex with KhpB.

The protein resides in the cytoplasm. Functionally, a probable RNA chaperone. Forms a complex with KhpB which binds to cellular RNA and controls its expression. Plays a role in peptidoglycan (PG) homeostasis and cell length regulation. This is RNA-binding protein KhpA from Thermotoga maritima (strain ATCC 43589 / DSM 3109 / JCM 10099 / NBRC 100826 / MSB8).